A 512-amino-acid polypeptide reads, in one-letter code: Protein maph-9 (512 aa).

3 disordered regions span residues 24–103 (ISRK…DDDF), 168–386 (DLSE…KNEK), and 481–512 (GNRL…RPFR). Low complexity-rich tracts occupy residues 30-39 (TTTTSSGSSG) and 78-95 (STLS…STAA). Residues 178–200 (TDHEDPSLTFRVDKELEQSESKK) show a composition bias toward basic and acidic residues. The span at 230 to 239 (PQTSANLSTK) shows a compositional bias: polar residues. 2 stretches are compositionally biased toward basic and acidic residues: residues 260–302 (KPSD…RENS) and 310–386 (VQDH…KNEK). Positions 267–429 (KEWLQKKERE…QLEESEKMTR (163 aa)) form a coiled coil. Over residues 502–512 (PGTTTSLRPFR) the composition is skewed to polar residues.

In terms of tissue distribution, expressed in amphid and phasmid ciliated neurons.

It is found in the cell projection. The protein localises to the cilium. It localises to the cytoplasm. The protein resides in the cytoskeleton. Its subcellular location is the cilium axoneme. This is Protein maph-9 from Caenorhabditis elegans.